Reading from the N-terminus, the 413-residue chain is Ureide permease 5 (413 aa).

The Extracellular portion of the chain corresponds to 1 to 18 (MMIAQELGIYVVESKGGA). A helical membrane pass occupies residues 19 to 39 (ILCLLLSLLCLGTWPALMALL). At 40–50 (ERRGRLPQHTY) the chain is on the cytoplasmic side. Residues 51 to 71 (LDYSITNFLAAIFIAFVFGGI) traverse the membrane as a helical segment. Topologically, residues 72-91 (GESTHEAPSFITQLTQIQDN) are extracellular. The chain crosses the membrane as a helical span at residues 92–112 (WPSVLFAMAGGVGLSIGNLAT). Residues 113-115 (QYS) lie on the Cytoplasmic side of the membrane. A helical membrane pass occupies residues 116-136 (LAFVGLSVTEVTAASITVVVG). Residues 137–149 (TTVNYFLDNGLNR) lie on the Extracellular side of the membrane. The helical transmembrane segment at 150–170 (ADILFSGVGCFMVAVCLGSAV) threads the bilayer. At 171-240 (HSSNSADIKA…RAIKVLGKSM (70 aa)) the chain is on the cytoplasmic side. 232-239 (AIKVLGKS) is a binding site for ATP. Residues 241-261 (VVGLGITFFAGLSFSLFSPLF) form a helical membrane-spanning segment. The Extracellular portion of the chain corresponds to 262–278 (NLATNDQWHTLKQGVPK). A helical transmembrane segment spans residues 279 to 299 (LIVYTAFFYFSLSCFVIAVAL). Residues 300–326 (NISFLYKPVLDSPRSSFREYLSDWNGR) are Cytoplasmic-facing. The helical transmembrane segment at 327–347 (GWALAAGLLCGFGNGLQFMGG) threads the bilayer. The Extracellular portion of the chain corresponds to 348–352 (QAAGY). Residues 353 to 373 (AASDAVQALPLVSTFWGIYLF) traverse the membrane as a helical segment. At 374–384 (GEYRRSSTRTY) the chain is on the cytoplasmic side. Residues 385-405 (ALLVGMLVMFTVAVGLLMASA) form a helical membrane-spanning segment. Topologically, residues 406–413 (GERETRFT) are extracellular.

Belongs to the plant ureide permease (TC 2.A.7.19) family. In terms of tissue distribution, expressed in lateral roots, rosette leaves, stems, stipules, flower stigma, pedicels and the connective tissue between pollen sacks.

The protein localises to the membrane. In terms of biological role, proton-coupled transporter that transports a wide spectrum of oxo derivatives of heterocyclic nitrogen compounds, including allantoin, uric acid and xanthine, but not adenine. Mediates transport of uracil and 5-fluorouracil (a toxic uracil analog). Functionally, proton-coupled transporter that transports a wide spectrum of oxo derivatives of heterocyclic nitrogen compounds, including allantoin, xanthine and uracil. This is Ureide permease 5 from Arabidopsis thaliana (Mouse-ear cress).